A 304-amino-acid chain; its full sequence is Neurexophilin-4 (304 aa).

Positions 1 to 23 (MRLLPEWLLLLFGPWLLRKVISG) are cleaved as a signal peptide. Residues 24–84 (QIVESGRPQY…GALARPGAAG (61 aa)) are II. N-linked (GlcNAc...) asparagine glycans are attached at residues Asn72, Asn133, Asn143, and Asn149. Positions 85–163 (GPPVPRTKRK…IVPPSKRVEF (79 aa)) are III. The IV (linker domain) stretch occupies residues 164–220 (GGVWLPGPAPHPLQSTLALEGVLPGLGPPLGMAGQGLGGNLGGALAGPLGGALGVPG). The tract at residues 221 to 304 (AKESRAFNCH…NFQSEHPYFG (84 aa)) is v (Cys-rich).

It belongs to the neurexophilin family. In terms of processing, may be proteolytically processed in neuron-like cells. In terms of tissue distribution, brain and kidney.

The protein localises to the secreted. Its function is as follows. May be signaling molecules that resemble neuropeptides and that act by binding to alpha-neurexins and possibly other receptors. In Rattus norvegicus (Rat), this protein is Neurexophilin-4 (Nxph4).